Here is a 254-residue protein sequence, read N- to C-terminus: Proteasome subunit alpha (254 aa).

The segment at 231–254 is disordered; that stretch reads ESGAASADGEAETEAETDSGSDEE. Residues 239–254 show a composition bias toward acidic residues; it reads GEAETEAETDSGSDEE.

Belongs to the peptidase T1A family. As to quaternary structure, the 20S proteasome core is composed of 14 alpha and 14 beta subunits that assemble into four stacked heptameric rings, resulting in a barrel-shaped structure. The two inner rings, each composed of seven catalytic beta subunits, are sandwiched by two outer rings, each composed of seven alpha subunits. The catalytic chamber with the active sites is on the inside of the barrel. Has probably a gated structure, the ends of the cylinder being occluded by the N-termini of the alpha-subunits. Is likely capped by the proteasome-associated ATPase, ARC. Post-translationally, the N-terminus is blocked.

The protein localises to the cytoplasm. The protein operates within protein degradation; proteasomal Pup-dependent pathway. Its activity is regulated as follows. The formation of the proteasomal ATPase ARC-20S proteasome complex, likely via the docking of the C-termini of ARC into the intersubunit pockets in the alpha-rings, may trigger opening of the gate for substrate entry. Interconversion between the open-gate and close-gate conformations leads to a dynamic regulation of the 20S proteasome proteolysis activity. Peptidolytic activity is completely inhibited by lactacystin, and to a lesser extent, by N-acetyl-Leu-Leu-norleucinal (Ac-LLnL) and benzoyloxycarbonyl-Leu-Leu-Leu-vinylsulfone (Z-LLL-VS) in vitro. Functionally, component of the proteasome core, a large protease complex with broad specificity involved in protein degradation. The S.coelicolor proteasome is able to cleave oligopeptides after hydrophobic residues, but not after basic or acidic residues, thus displaying chymotrypsin-like activity but not trypsin-like activity. This chain is Proteasome subunit alpha, found in Streptomyces coelicolor (strain ATCC BAA-471 / A3(2) / M145).